The following is a 200-amino-acid chain: Segregation and condensation protein B (200 aa).

It belongs to the ScpB family. Homodimer. Homodimerization may be required to stabilize the binding of ScpA to the Smc head domains. Component of a cohesin-like complex composed of ScpA, ScpB and the Smc homodimer, in which ScpA and ScpB bind to the head domain of Smc. The presence of the three proteins is required for the association of the complex with DNA.

It localises to the cytoplasm. Functionally, participates in chromosomal partition during cell division. May act via the formation of a condensin-like complex containing Smc and ScpA that pull DNA away from mid-cell into both cell halves. In Lactobacillus delbrueckii subsp. bulgaricus (strain ATCC 11842 / DSM 20081 / BCRC 10696 / JCM 1002 / NBRC 13953 / NCIMB 11778 / NCTC 12712 / WDCM 00102 / Lb 14), this protein is Segregation and condensation protein B.